The following is a 310-amino-acid chain: Glycerol-3-phosphate dehydrogenase [NAD(P)+] (310 aa).

Positions 19, 39, 40, and 87 each coordinate NADPH. The sn-glycerol 3-phosphate site is built by K87 and G115. Residue S119 coordinates NADPH. 5 residues coordinate sn-glycerol 3-phosphate: K170, D223, S233, R234, and N235. The Proton acceptor role is filled by K170. R234 serves as a coordination point for NADPH. E260 contacts NADPH.

It belongs to the NAD-dependent glycerol-3-phosphate dehydrogenase family.

The protein resides in the cytoplasm. The enzyme catalyses sn-glycerol 3-phosphate + NAD(+) = dihydroxyacetone phosphate + NADH + H(+). The catalysed reaction is sn-glycerol 3-phosphate + NADP(+) = dihydroxyacetone phosphate + NADPH + H(+). It participates in membrane lipid metabolism; glycerophospholipid metabolism. In terms of biological role, catalyzes the reduction of the glycolytic intermediate dihydroxyacetone phosphate (DHAP) to sn-glycerol 3-phosphate (G3P), the key precursor for phospholipid synthesis. The sequence is that of Glycerol-3-phosphate dehydrogenase [NAD(P)+] from Synechococcus sp. (strain JA-3-3Ab) (Cyanobacteria bacterium Yellowstone A-Prime).